The primary structure comprises 482 residues: tRNA sulfurtransferase (482 aa).

The region spanning 61 to 165 (LAIRDALTRI…DDRLLLIKGR (105 aa)) is the THUMP domain. ATP contacts are provided by residues 183 to 184 (LI), Lys-265, Gly-287, and Gln-296. An intrachain disulfide couples Cys-344 to Cys-456. In terms of domain architecture, Rhodanese spans 404–482 (FGPNDVILDI…GFANVKVYRP (79 aa)). The active-site Cysteine persulfide intermediate is the Cys-456.

The protein belongs to the ThiI family.

It localises to the cytoplasm. It catalyses the reaction [ThiI sulfur-carrier protein]-S-sulfanyl-L-cysteine + a uridine in tRNA + 2 reduced [2Fe-2S]-[ferredoxin] + ATP + H(+) = [ThiI sulfur-carrier protein]-L-cysteine + a 4-thiouridine in tRNA + 2 oxidized [2Fe-2S]-[ferredoxin] + AMP + diphosphate. It carries out the reaction [ThiS sulfur-carrier protein]-C-terminal Gly-Gly-AMP + S-sulfanyl-L-cysteinyl-[cysteine desulfurase] + AH2 = [ThiS sulfur-carrier protein]-C-terminal-Gly-aminoethanethioate + L-cysteinyl-[cysteine desulfurase] + A + AMP + 2 H(+). It functions in the pathway cofactor biosynthesis; thiamine diphosphate biosynthesis. Catalyzes the ATP-dependent transfer of a sulfur to tRNA to produce 4-thiouridine in position 8 of tRNAs, which functions as a near-UV photosensor. Also catalyzes the transfer of sulfur to the sulfur carrier protein ThiS, forming ThiS-thiocarboxylate. This is a step in the synthesis of thiazole, in the thiamine biosynthesis pathway. The sulfur is donated as persulfide by IscS. This chain is tRNA sulfurtransferase, found in Salmonella choleraesuis (strain SC-B67).